The primary structure comprises 119 residues: uncharacterized protein (119 aa).

2 consecutive transmembrane segments (helical) span residues 7-27 (ILHNALYYVLIIIYEYVLLLV) and 32-52 (YFFEFLFLFLPLWLVFFFLML).

It localises to the membrane. This is an uncharacterized protein from Saccharomyces cerevisiae (strain ATCC 204508 / S288c) (Baker's yeast).